Consider the following 572-residue polypeptide: Urocanate hydratase (572 aa).

NAD(+) contacts are provided by residues 48-49, glutamine 126, 172-174, aspartate 192, 238-239, 259-263, 268-269, and tyrosine 317; these read GG, GMG, NA, QTSAH, and YL. Cysteine 405 is an active-site residue. An NAD(+)-binding site is contributed by glycine 487. Over residues 550–559 the composition is skewed to basic and acidic residues; the sequence is EGDEAHEGDA. The segment at 550 to 572 is disordered; it reads EGDEAHEGDAAHGSGAAREGDGV.

Belongs to the urocanase family. It depends on NAD(+) as a cofactor.

It is found in the cytoplasm. The enzyme catalyses 4-imidazolone-5-propanoate = trans-urocanate + H2O. It functions in the pathway amino-acid degradation; L-histidine degradation into L-glutamate; N-formimidoyl-L-glutamate from L-histidine: step 2/3. Catalyzes the conversion of urocanate to 4-imidazolone-5-propionate. In Streptomyces coelicolor (strain ATCC BAA-471 / A3(2) / M145), this protein is Urocanate hydratase.